The chain runs to 121 residues: Large ribosomal subunit protein bL19 (121 aa).

Belongs to the bacterial ribosomal protein bL19 family.

This protein is located at the 30S-50S ribosomal subunit interface and may play a role in the structure and function of the aminoacyl-tRNA binding site. The protein is Large ribosomal subunit protein bL19 of Neisseria gonorrhoeae (strain ATCC 700825 / FA 1090).